A 354-amino-acid polypeptide reads, in one-letter code: Rhodopsin (354 aa).

Residues 1–36 (MNGTEGPMFYVPMSNATGVVKSPYDYPQYYLVAPWA) are Extracellular-facing. 2 N-linked (GlcNAc...) asparagine glycosylation sites follow: Asn-2 and Asn-15. Residues 37-61 (YGCLAAYMFFLIITGFPINFLTLYV) form a helical membrane-spanning segment. The Cytoplasmic segment spans residues 62 to 73 (TIEHKKLRTPLN). Residues 74 to 96 (YILLNLAISDLFMVFGGFTTTMY) form a helical membrane-spanning segment. Over 97-110 (TSLHGYFVFGRIGC) the chain is Extracellular. An intrachain disulfide couples Cys-110 to Cys-187. The helical transmembrane segment at 111–133 (NLEGFFATLGGEMGLWSLVVLAF) threads the bilayer. The 'Ionic lock' involved in activated form stabilization motif lies at 134-136 (ERW). The Cytoplasmic segment spans residues 134–152 (ERWMVVCKPVSNFRFGENH). A helical transmembrane segment spans residues 153-173 (AIMGVVFTWFMACTCAVPPLV). The Extracellular portion of the chain corresponds to 174 to 202 (GWSRYIPEGMQCSCGVDYYTRAPGYNNES). The chain crosses the membrane as a helical span at residues 203 to 224 (FVIYMFLVHFIIPLIVIFFCYG). Over 225–252 (RLVCTVKDAAAQQQESETTQRAEREVTR) the chain is Cytoplasmic. A helical transmembrane segment spans residues 253 to 274 (MVVIMVIGFLICWIPYASVAWY). The Extracellular segment spans residues 275–286 (IFTHQGSEFGPV). A helical membrane pass occupies residues 287–308 (FMTVPAFFAKSAAVYNPCIYIC). Lys-296 is modified (N6-(retinylidene)lysine). The Cytoplasmic segment spans residues 309–354 (MNKQFRHCMITTLCCGKNPFEEEEGASTTASKTEASSVSSSSVSPA). 2 S-palmitoyl cysteine lipidation sites follow: Cys-322 and Cys-323. Residues 333–354 (GASTTASKTEASSVSSSSVSPA) are disordered. Residues 334 to 354 (ASTTASKTEASSVSSSSVSPA) show a composition bias toward low complexity.

The protein belongs to the G-protein coupled receptor 1 family. Opsin subfamily. In terms of processing, phosphorylated on some or all of the serine and threonine residues present in the C-terminal region. Contains one covalently linked retinal chromophore.

It is found in the membrane. Its subcellular location is the cell projection. The protein resides in the cilium. It localises to the photoreceptor outer segment. Functionally, photoreceptor required for image-forming vision at low light intensity. While most salt water fish species use retinal as chromophore, most freshwater fish use 3-dehydroretinal, or a mixture of retinal and 3-dehydroretinal. Light-induced isomerization of 11-cis to all-trans retinal triggers a conformational change that activates signaling via G-proteins. Subsequent receptor phosphorylation mediates displacement of the bound G-protein alpha subunit by arrestin and terminates signaling. The sequence is that of Rhodopsin (rho) from Cyprinus carpio (Common carp).